The chain runs to 316 residues: Uracil-DNA glycosylase (316 aa).

A compositionally biased stretch (low complexity) spans 36–79 (AAAAAPAGAGAGASKPARPSAAARPAKGTPAASAATTATGADAS). The interval 36–91 (AAAAAPAGAGAGASKPARPSAAARPAKGTPAASAATTATGADASAPPPDPGAPTWD) is disordered. D159 serves as the catalytic Proton acceptor.

This sequence belongs to the uracil-DNA glycosylase (UDG) superfamily. UNG family.

It is found in the host nucleus. The enzyme catalyses Hydrolyzes single-stranded DNA or mismatched double-stranded DNA and polynucleotides, releasing free uracil.. In terms of biological role, excises uracil residues from the DNA which can arise as a result of misincorporation of dUMP residues by DNA polymerase or deamination of cytosines. Therefore may reduce deleterious uracil incorporation into the viral genome, particularly in terminally differentiated cells which lack DNA repair enzymes. The polypeptide is Uracil-DNA glycosylase (UL2) (Sus scrofa (Pig)).